Reading from the N-terminus, the 268-residue chain is MNRKEISKVVDLVRESNPLVHNITNVVVTNFTANGLLALGASPVMAYAKEEVAEMASIAGALVLNMGTLRPEEVEAMLLAGKSANVNNVPVLFDPVGAGATSYRTEVARHIPAEIELAIIRGNAAEIANVINERWEIKGVDAGAGNGNVVSIAKQAADELNTVAVITGKEDVVTDGQRTIVIRNGHPILTKVTGTGCLLTSVIGAFVAVEKDYVKAAVAALTFYGVAAELAAAKTVEKGPGSFQIEFLNQLANTTSGDIEKYGEIEVI.

Met-45 provides a ligand contact to substrate. 2 residues coordinate ATP: Arg-121 and Thr-167. Gly-194 contacts substrate.

This sequence belongs to the Thz kinase family. Mg(2+) serves as cofactor.

The catalysed reaction is 5-(2-hydroxyethyl)-4-methylthiazole + ATP = 4-methyl-5-(2-phosphooxyethyl)-thiazole + ADP + H(+). The protein operates within cofactor biosynthesis; thiamine diphosphate biosynthesis; 4-methyl-5-(2-phosphoethyl)-thiazole from 5-(2-hydroxyethyl)-4-methylthiazole: step 1/1. Catalyzes the phosphorylation of the hydroxyl group of 4-methyl-5-beta-hydroxyethylthiazole (THZ). This chain is Hydroxyethylthiazole kinase, found in Bacillus cereus (strain Q1).